The sequence spans 205 residues: Small ribosomal subunit protein uS4 (205 aa).

The span at 1-16 (MSKRESSKYKIDRRMG) shows a compositional bias: basic and acidic residues. A disordered region spans residues 1–46 (MSKRESSKYKIDRRMGENIWGRPKSPVNRREYGPGQHGQRRKSKLS). The 64-residue stretch at 94 to 157 (SRLDAIVYRA…KQLVTVLEAV (64 aa)) folds into the S4 RNA-binding domain.

Belongs to the universal ribosomal protein uS4 family. In terms of assembly, part of the 30S ribosomal subunit. Contacts protein S5. The interaction surface between S4 and S5 is involved in control of translational fidelity.

In terms of biological role, one of the primary rRNA binding proteins, it binds directly to 16S rRNA where it nucleates assembly of the body of the 30S subunit. Functionally, with S5 and S12 plays an important role in translational accuracy. In Sinorhizobium medicae (strain WSM419) (Ensifer medicae), this protein is Small ribosomal subunit protein uS4.